A 1148-amino-acid polypeptide reads, in one-letter code: Phospholipid-transporting ATPase IB (1148 aa).

Over 1 to 54 (MSRATSVGDQLDVPARTIYLNQPHLNKFCDNQISTAKYSVVTFLPRFLYEQIRR) the chain is Cytoplasmic. Residue Thr-5 is modified to Phosphothreonine. A helical transmembrane segment spans residues 55–75 (AANAFFLFIALLQQIPDVSPT). Residues 76 to 79 (GRYT) are Exoplasmic loop-facing. The helical transmembrane segment at 80-100 (TLVPLIIILTIAGIKEIVEDF) threads the bilayer. Over 101–276 (KRHKADNAVN…SNVEKVTNVQ (176 aa)) the chain is Cytoplasmic. The chain crosses the membrane as a helical span at residues 277–297 (ILVLFGILLVMALVSSVGALY). Topologically, residues 298–324 (WNGSQGGKNWYIKKMDATSDNFGYNLL) are exoplasmic loop. Residues 325–345 (TFIILYNNLIPISLLVTLEVV) traverse the membrane as a helical segment. Residues 346-847 (KYTQALFINW…CILYCFYKNV (502 aa)) are Cytoplasmic-facing. The 4-aspartylphosphate intermediate role is filled by Asp-388. 12 residues coordinate ATP: Asp-388, Lys-389, Thr-390, Glu-488, Phe-529, Lys-552, Arg-585, Thr-665, Gly-666, Asp-667, Arg-755, and Lys-761. Asp-388 contacts Mg(2+). Mg(2+) is bound at residue Thr-390. Asp-781 is a binding site for Mg(2+). Residues Asn-784 and Asp-785 each coordinate ATP. Asp-785 serves as a coordination point for Mg(2+). The helical transmembrane segment at 848–868 (VLYIIELWFAFVNGFSGQILF) threads the bilayer. The Exoplasmic loop segment spans residues 869–870 (ER). Residues 871-891 (WCIGLYNVIFTALPPFTLGIF) form a helical membrane-spanning segment. The Cytoplasmic segment spans residues 892–919 (ERSCSQESMLRFPQLYKITQNAEGFNTK). Residues 920-940 (VFWGHCINALVHSLILFWFPM) traverse the membrane as a helical segment. Residues 941-957 (KALEHDTVLANGHATDY) lie on the Exoplasmic loop side of the membrane. Residues 958 to 978 (LFVGNIVYTYVVVTVCLKAGL) traverse the membrane as a helical segment. Topologically, residues 979-988 (ETTAWTKFSH) are cytoplasmic. The chain crosses the membrane as a helical span at residues 989 to 1009 (LAVWGSMLIWLVFFGIYSTIW). Residues 1010–1023 (PTIPIAPDMKGQAT) are Exoplasmic loop-facing. The helical transmembrane segment at 1024 to 1044 (MVLSSAHFWLGLFLVPTACLI) threads the bilayer. Residues 1045-1148 (EDVAWRAAKH…DTTKQKSRKK (104 aa)) lie on the Cytoplasmic side of the membrane. The segment at 1102 to 1126 (PPTLFRGSSLQQSMPHGYAFSQEEH) is disordered.

It belongs to the cation transport ATPase (P-type) (TC 3.A.3) family. Type IV subfamily. Component of a P4-ATPase flippase complex which consists of a catalytic alpha subunit and an accessory beta subunit. Interacts with TMEM30A to form a flippase complex. Mg(2+) serves as cofactor. As to expression, expressed in retinal photoreceptor cells and testis.

Its subcellular location is the membrane. It localises to the golgi apparatus membrane. The protein resides in the endosome membrane. It is found in the cell membrane. The protein localises to the photoreceptor outer segment membrane. Its subcellular location is the photoreceptor inner segment membrane. It carries out the reaction ATP + H2O + phospholipidSide 1 = ADP + phosphate + phospholipidSide 2.. The enzyme catalyses a 1,2-diacyl-sn-glycero-3-phospho-L-serine(out) + ATP + H2O = a 1,2-diacyl-sn-glycero-3-phospho-L-serine(in) + ADP + phosphate + H(+). The catalysed reaction is a 1,2-diacyl-sn-glycero-3-phosphoethanolamine(in) + ATP + H2O = a 1,2-diacyl-sn-glycero-3-phosphoethanolamine(out) + ADP + phosphate + H(+). With respect to regulation, ATPase activity is stimulated by phosphatidylserine (PS) and minimally by phosphatidylethanolamine (PE). ATPase activity is inhibited by N-ethylmaleimide (NEM) and vanadate. Flippase activity is inhibited by NEM and 1,2-dioleoyl-sn-glycero-3-phospho-L-serine (DOPS). In terms of biological role, catalytic component of a P4-ATPase flippase complex which catalyzes the hydrolysis of ATP coupled to the transport of aminophospholipids from the outer to the inner leaflet of various membranes and ensures the maintenance of asymmetric distribution of phospholipids. Able to translocate phosphatidylserine, but not phosphatidylcholine. Phospholipid translocation seems also to be implicated in vesicle formation and in uptake of lipid signaling molecules. Reconstituted to liposomes, the ATP8A2:TMEM30A flippase complex predominantly transports phosphatidylserine (PS) and to a lesser extent phosphatidylethanolamine (PE). Phospholipid translocation is not associated with a countertransport of an inorganic ion or other charged substrate from the cytoplasmic side toward the exoplasm in connection with the phosphorylation from ATP. ATP8A2:TMEM30A may be involved in regulation of neurite outgrowth. Proposed to function in the generation and maintenance of phospholipid asymmetry in photoreceptor disk membranes and neuronal axon membranes. May be involved in vesicle trafficking in neuronal cells. Required for normal visual and auditory function; involved in photoreceptor and inner ear spiral ganglion cell survival. This Bos taurus (Bovine) protein is Phospholipid-transporting ATPase IB.